The following is a 157-amino-acid chain: Myosin essential light chain, striated adductor muscle (157 aa).

EF-hand domains follow at residues 7 to 44 (DEID…LGIN) and 82 to 117 (GTFA…LGER).

In molluscan muscle, calcium regulation is associated with myosin rather than with actin. Muscle myosin contains two types of light chains: the catalytic light chain, essential for ATPase activity, and the regulatory light chain, a calcium-binding protein responsible for Ca(2+) dependent binding and Ca(2+) dependent Mg-ATPase activity. This Argopecten irradians (Bay scallop) protein is Myosin essential light chain, striated adductor muscle.